The primary structure comprises 229 residues: Urease accessory protein UreF (229 aa).

Belongs to the UreF family. In terms of assembly, ureD, UreF and UreG form a complex that acts as a GTP-hydrolysis-dependent molecular chaperone, activating the urease apoprotein by helping to assemble the nickel containing metallocenter of UreC. The UreE protein probably delivers the nickel.

Its subcellular location is the cytoplasm. Required for maturation of urease via the functional incorporation of the urease nickel metallocenter. This is Urease accessory protein UreF from Alcanivorax borkumensis (strain ATCC 700651 / DSM 11573 / NCIMB 13689 / SK2).